The following is a 332-amino-acid chain: MATMKDIARLAQVSTSTVSHVINGSRFVSDEIREKVMRIVAELNYTPSAVARSLKVRETKTIGLLVTATNNPFFAEVMAGVEQYCQKNQYNLIIATTGGDAKRLQQNLQTLMHKQVDGLLLMCGDSRFQADIELAISLPLVVMDWWFTELNADKILENSALGGYLATKALIDAGHRKIGIITGNLKKSVAQNRLQGYKNALSEAKIALNPHWIVESHFDFEGGVLGIQSLLTQSSRPTAVFCCSDTIAVGAYQAIQQQGLRIPQDLSIMGYDDIELARYLSPPLSTICQPKAELGKLAVETLLQRIKNPNENYRTLVLEPTCVLRESIYSLK.

The 55-residue stretch at 2-56 folds into the HTH lacI-type domain; the sequence is ATMKDIARLAQVSTSTVSHVINGSRFVSDEIREKVMRIVAELNYTPSAVARSLKV. Positions 4 to 23 form a DNA-binding region, H-T-H motif; it reads MKDIARLAQVSTSTVSHVIN.

Its function is as follows. Transcriptional repressor for the ribose rbsDACBK operon. The polypeptide is Ribose operon repressor (rbsR) (Haemophilus influenzae (strain ATCC 51907 / DSM 11121 / KW20 / Rd)).